The following is a 316-amino-acid chain: tRNA pseudouridine synthase B (316 aa).

Asp47 serves as the catalytic Nucleophile.

The protein belongs to the pseudouridine synthase TruB family. Type 1 subfamily.

It carries out the reaction uridine(55) in tRNA = pseudouridine(55) in tRNA. In terms of biological role, responsible for synthesis of pseudouridine from uracil-55 in the psi GC loop of transfer RNAs. This is tRNA pseudouridine synthase B from Photobacterium profundum (strain SS9).